The chain runs to 220 residues: ATP synthase F(0) complex subunit a (220 aa).

The next 6 membrane-spanning stretches (helical) occupy residues 12–32, 69–89, 91–111, 130–150, 158–178, and 183–203; these read PTLL…TLLP, WAMI…FTPT, QLSL…LLGL, LLIP…PFAL, LTAG…LLPM, and ALLT…VAMI.

The protein belongs to the ATPase A chain family. In terms of assembly, component of the ATP synthase complex composed at least of ATP5F1A/subunit alpha, ATP5F1B/subunit beta, ATP5MC1/subunit c (homooctomer), MT-ATP6/subunit a, MT-ATP8/subunit 8, ATP5ME/subunit e, ATP5MF/subunit f, ATP5MG/subunit g, ATP5MK/subunit k, ATP5MJ/subunit j, ATP5F1C/subunit gamma, ATP5F1D/subunit delta, ATP5F1E/subunit epsilon, ATP5PF/subunit F6, ATP5PB/subunit b, ATP5PD/subunit d, ATP5PO/subunit OSCP. ATP synthase complex consists of a soluble F(1) head domain (subunits alpha(3) and beta(3)) - the catalytic core - and a membrane F(0) domain - the membrane proton channel (subunits c, a, 8, e, f, g, k and j). These two domains are linked by a central stalk (subunits gamma, delta, and epsilon) rotating inside the F1 region and a stationary peripheral stalk (subunits F6, b, d, and OSCP). Interacts with DNAJC30; interaction is direct.

It is found in the mitochondrion inner membrane. It catalyses the reaction H(+)(in) = H(+)(out). Functionally, subunit a, of the mitochondrial membrane ATP synthase complex (F(1)F(0) ATP synthase or Complex V) that produces ATP from ADP in the presence of a proton gradient across the membrane which is generated by electron transport complexes of the respiratory chain. ATP synthase complex consist of a soluble F(1) head domain - the catalytic core - and a membrane F(1) domain - the membrane proton channel. These two domains are linked by a central stalk rotating inside the F(1) region and a stationary peripheral stalk. During catalysis, ATP synthesis in the catalytic domain of F(1) is coupled via a rotary mechanism of the central stalk subunits to proton translocation. With the subunit c (ATP5MC1), forms the proton-conducting channel in the F(0) domain, that contains two crucial half-channels (inlet and outlet) that facilitate proton movement from the mitochondrial intermembrane space (IMS) into the matrix. Protons are taken up via the inlet half-channel and released through the outlet half-channel, following a Grotthuss mechanism. In Latimeria chalumnae (Coelacanth), this protein is ATP synthase F(0) complex subunit a.